The following is a 32-amino-acid chain: Cyclotide glopa A (32 aa).

A cross-link (cyclopeptide (Gly-Asn)) is located at residues 1-32 (GGSIPCIETCVWTGCFLVPGCSCKSDKKCYLN). 3 disulfide bridges follow: Cys6–Cys21, Cys10–Cys23, and Cys15–Cys29.

In terms of processing, this is a cyclic peptide.

Its function is as follows. Probably participates in a plant defense mechanism. In Gloeospermum pauciflorum, this protein is Cyclotide glopa A.